Here is a 726-residue protein sequence, read N- to C-terminus: Ribonuclease R (726 aa).

Residues 262-590 (RIDLRHLPFF…LVHRVIKNLL (329 aa)) enclose the RNB domain. Residues 642 to 723 (GDVLTGVISN…NERKIELSLY (82 aa)) form the S1 motif domain.

Belongs to the RNR ribonuclease family. RNase R subfamily. As to quaternary structure, monomer.

Its subcellular location is the cytoplasm. It catalyses the reaction Exonucleolytic cleavage in the 3'- to 5'-direction to yield nucleoside 5'-phosphates.. In terms of biological role, 3'-5' exoribonuclease that releases 5'-nucleoside monophosphates and is involved in maturation of structured RNAs. In Buchnera aphidicola subsp. Schizaphis graminum (strain Sg), this protein is Ribonuclease R.